The following is a 105-amino-acid chain: Antithrombin-III (105 aa).

The first 17 residues, 1 to 17 (MHLFIGVSLRPLGHGIP), serve as a signal peptide directing secretion. Residues 38–105 (ICIYRNPEKK…MRRTSSCRPS (68 aa)) form a disordered region. The span at 43–53 (NPEKKPQERRG) shows a compositional bias: basic and acidic residues.

Belongs to the serpin family. As to quaternary structure, forms protease inhibiting heterodimer with TMPRSS7. As to expression, plasma.

The protein localises to the secreted. It localises to the extracellular space. Its function is as follows. Most important serine protease inhibitor in plasma that regulates the blood coagulation cascade. AT-III inhibits thrombin, matriptase-3/TMPRSS7, as well as factors IXa, Xa and XIa. Its inhibitory activity is greatly enhanced in the presence of heparin. The polypeptide is Antithrombin-III (SERPINC1) (Gallus gallus (Chicken)).